A 315-amino-acid chain; its full sequence is MSKLMVFTGNANPELARRVVRRLGLPIGNATVGKFSDSEITVEINENVRGKDVFIIQSTCAPSNDNLMELIVMADALRRASATRVTAVIPYFGYARQDRRVRSARVPITAKVVADMISAVGINRVLTVDLHADQIQGFFDIPVDNVYATPLLLDDLQRQGHENITVVSPDVGGVVRARAFAKLLDDADLAIIDKRRPRANEAQIMHLIGDVEGKTCVLVDDMCDTGGTLCAAAKALKEHGAAKVLAYCTHPVLSGKAIENIKNSVLDELVVTDTIPLTQEALNCPQIRQLSMSDIMAEAVRRVCNEESISAMFGA.

Residues 37–39 (DSE) and 96–97 (RQ) contribute to the ATP site. The Mg(2+) site is built by H131 and D170. Residue K194 is part of the active site. D-ribose 5-phosphate-binding positions include R196, D220, and 224 to 228 (DTGGT).

It belongs to the ribose-phosphate pyrophosphokinase family. Class I subfamily. As to quaternary structure, homohexamer. Requires Mg(2+) as cofactor.

It is found in the cytoplasm. It catalyses the reaction D-ribose 5-phosphate + ATP = 5-phospho-alpha-D-ribose 1-diphosphate + AMP + H(+). It functions in the pathway metabolic intermediate biosynthesis; 5-phospho-alpha-D-ribose 1-diphosphate biosynthesis; 5-phospho-alpha-D-ribose 1-diphosphate from D-ribose 5-phosphate (route I): step 1/1. In terms of biological role, involved in the biosynthesis of the central metabolite phospho-alpha-D-ribosyl-1-pyrophosphate (PRPP) via the transfer of pyrophosphoryl group from ATP to 1-hydroxyl of ribose-5-phosphate (Rib-5-P). This is Ribose-phosphate pyrophosphokinase from Marinomonas sp. (strain MWYL1).